A 602-amino-acid chain; its full sequence is Proteasome-associated ATPase (602 aa).

Residues 13-89 adopt a coiled-coil conformation; sequence PDAAEVERLR…LREEVDRLGQ (77 aa). 289–294 provides a ligand contact to ATP; that stretch reads GCGKTL. Residues 601-602 form a docks into pockets in the proteasome alpha-ring region; it reads YL.

The protein belongs to the AAA ATPase family. In terms of assembly, homohexamer. Assembles into a hexameric ring structure that caps the 20S proteasome core. Strongly interacts with the prokaryotic ubiquitin-like protein Pup through a hydrophobic interface; the interacting region of ARC lies in its N-terminal coiled-coil domain. There is one Pup binding site per ARC hexamer ring. Upon ATP-binding, the C-terminus of ARC interacts with the alpha-rings of the proteasome core, possibly by binding to the intersubunit pockets.

The protein operates within protein degradation; proteasomal Pup-dependent pathway. In terms of biological role, ATPase which is responsible for recognizing, binding, unfolding and translocation of pupylated proteins into the bacterial 20S proteasome core particle. May be essential for opening the gate of the 20S proteasome via an interaction with its C-terminus, thereby allowing substrate entry and access to the site of proteolysis. Thus, the C-termini of the proteasomal ATPase may function like a 'key in a lock' to induce gate opening and therefore regulate proteolysis. This is Proteasome-associated ATPase from Mycobacteroides abscessus (strain ATCC 19977 / DSM 44196 / CCUG 20993 / CIP 104536 / JCM 13569 / NCTC 13031 / TMC 1543 / L948) (Mycobacterium abscessus).